The chain runs to 299 residues: Probable lipid kinase YegS (299 aa).

A DAGKc domain is found at 2-133 (ANFPDSLLIL…IDMARVNDKT (132 aa)). ATP is bound by residues Thr-40, 66 to 72 (GDGTINE), and Thr-95. The Mg(2+) site is built by Leu-215, Asp-218, and Leu-220. Catalysis depends on Glu-271, which acts as the Proton acceptor.

Belongs to the diacylglycerol/lipid kinase family. YegS lipid kinase subfamily. Mg(2+) serves as cofactor. The cofactor is Ca(2+).

The protein localises to the cytoplasm. Probably phosphorylates lipids; the in vivo substrate is unknown. This is Probable lipid kinase YegS from Salmonella arizonae (strain ATCC BAA-731 / CDC346-86 / RSK2980).